A 514-amino-acid chain; its full sequence is Probable cytochrome P450 6w1 (514 aa).

Position 450 (Cys-450) interacts with heme.

This sequence belongs to the cytochrome P450 family. Heme is required as a cofactor.

It is found in the endoplasmic reticulum membrane. It localises to the microsome membrane. Functionally, may be involved in the metabolism of insect hormones and in the breakdown of synthetic insecticides. In Drosophila melanogaster (Fruit fly), this protein is Probable cytochrome P450 6w1 (Cyp6w1).